A 692-amino-acid chain; its full sequence is Threonine--tRNA ligase (692 aa).

The disordered stretch occupies residues 1 to 20 (MSAPAQPAPGVDGGDPSQAR). Residues 1–74 (MSAPAQPAPG…DVDTDITPVA (74 aa)) enclose the TGS domain. The catalytic stretch occupies residues 269 to 575 (DHRKLGVELD…LTEHYAGAFP (307 aa)). Residues cysteine 374, histidine 425, and histidine 552 each contribute to the Zn(2+) site.

It belongs to the class-II aminoacyl-tRNA synthetase family. In terms of assembly, homodimer. It depends on Zn(2+) as a cofactor.

It is found in the cytoplasm. The catalysed reaction is tRNA(Thr) + L-threonine + ATP = L-threonyl-tRNA(Thr) + AMP + diphosphate + H(+). Its function is as follows. Catalyzes the attachment of threonine to tRNA(Thr) in a two-step reaction: L-threonine is first activated by ATP to form Thr-AMP and then transferred to the acceptor end of tRNA(Thr). Also edits incorrectly charged L-seryl-tRNA(Thr). In Mycobacterium tuberculosis (strain CDC 1551 / Oshkosh), this protein is Threonine--tRNA ligase.